The following is a 78-amino-acid chain: Protein SlyX homolog (78 aa).

The protein belongs to the SlyX family.

This is Protein SlyX homolog from Xylella fastidiosa (strain 9a5c).